The chain runs to 350 residues: MGAGASAEEKHSRELEKKLKEDAEKDARTVKLLLLGAGESGKSTIVKQMKIIHQDGYSLEECLEFIAIIYGNTLQSILAIVRAMTTLNIQYGDSARQDDARKLMHMADTIEEGTMPKEMSDIIQRLWKDSGIQACFDRASEYQLNDSAGYYLSDLERLVTPGYVPTEQDVLRSRVKTTGIIETQFSFKDLNFRMFDVGGQRSERKKWIHCFEGVTCIIFIAALSAYDMVLVEDDEVNRMHESLHLFNSICNHRYFATTSIVLFLNKKDVFSEKIKKAHLSICFPDYNGPNTYEDAGNYIKVQFLELNMRRDVKEIYSHMTCATDTQNVKFVFDAVTDIIIKENLKDCGLF.

The interval 1–21 is disordered; sequence MGAGASAEEKHSRELEKKLKE. Residue Gly2 is the site of N-myristoyl glycine attachment. A compositionally biased stretch (basic and acidic residues) spans 7–21; the sequence is AEEKHSRELEKKLKE. The G-alpha domain occupies 28 to 350; sequence RTVKLLLLGA…KENLKDCGLF (323 aa). The segment at 31–44 is G1 motif; the sequence is KLLLLGAGESGKST. Position 36–43 (36–43) interacts with GTP; it reads GAGESGKS. A Mg(2+)-binding site is contributed by Ser43. Phosphotyrosine is present on Tyr142. GTP contacts are provided by residues Asp146, 171–177, Gly199, 265–268, and Ala322; these read LRSRVKT and NKKD. A G2 motif region spans residues 169–177; sequence DVLRSRVKT. Thr177 serves as a coordination point for Mg(2+). The tract at residues 192-201 is G3 motif; that stretch reads FRMFDVGGQR. Residues 261–268 are G4 motif; it reads VLFLNKKD. Positions 320 to 325 are G5 motif; sequence TCATDT. The interaction with RHO stretch occupies residues 340–350; the sequence is IKENLKDCGLF.

Heterotrimeric G proteins are composed of 3 subunits alpha, beta and gamma. The alpha chain contains the guanine nucleotide binding site. Interacts with RHO. Interacts with RGS9 and PDE6G. Interacts (when myristoylated) with UNC119; interaction is required for localization in sensory neurons. As to expression, rod.

Its subcellular location is the cell projection. It is found in the cilium. The protein localises to the photoreceptor outer segment. The protein resides in the membrane. It localises to the photoreceptor inner segment. In terms of biological role, functions as a signal transducer for the rod photoreceptor RHO. Required for normal RHO-mediated light perception by the retina. Guanine nucleotide-binding proteins (G proteins) function as transducers downstream of G protein-coupled receptors (GPCRs), such as the photoreceptor RHO. The alpha chain contains the guanine nucleotide binding site and alternates between an active, GTP-bound state and an inactive, GDP-bound state. Activated RHO promotes GDP release and GTP binding. Signaling is mediated via downstream effector proteins, such as cGMP-phosphodiesterase. This Bos taurus (Bovine) protein is Guanine nucleotide-binding protein G(t) subunit alpha-1 (GNAT1).